The primary structure comprises 770 residues: Jhy protein (770 aa).

Disordered stretches follow at residues 1–249, 295–438, 493–527, 595–647, and 708–740; these read MNKY…SKQY, TVQN…SFVS, HRHESPSQRAPQSDHHMNTHRSTKTKKPAKQPQAE, ESQL…KRDV, and DYAKTIPKPKPPNLPDQTAKKTKNSRHSEKEGG. Residues 57-71 are compositionally biased toward basic and acidic residues; that stretch reads SWSDIKDQIQDKDME. Positions 72-85 are enriched in acidic residues; it reads PDSLEEDSPSETEE. A compositionally biased stretch (basic and acidic residues) spans 112 to 134; it reads HQVEDKYSDLRYDPNWKNKREEG. Positions 218–229 are enriched in low complexity; it reads SGLSQYLKSSSS. Residues 295–314 show a composition bias toward basic and acidic residues; it reads TVQNDKEVENTFMDPEDKWH. The segment covering 340 to 354 has biased composition (polar residues); sequence RGQSSDAANGQQPSR. Over residues 355-370 the composition is skewed to basic residues; that stretch reads RTAKARVRKQRKHQKG. A compositionally biased stretch (low complexity) spans 383-398; it reads QNNQNNPFQQPQNQRQ. Residues 410 to 438 show a composition bias toward polar residues; it reads AQTNASNPNLQDARTLTHNPKVTSDSFVS. The span at 493–509 shows a compositional bias: basic and acidic residues; the sequence is HRHESPSQRAPQSDHHM. Basic residues-rich tracts occupy residues 510–521 and 625–642; these read NTHRSTKTKKPA and GKRHRKRSSTKSSKLKGY.

As to expression, expressed in the brain, specifically in hypothalamus, pineal gland, and ependymal cells of the aqueduct of Sylvius, as well as in the choroid plexus of the third ventricle. Expressed in the ependymal cells lining the lateral ventricles (at protein level).

Its function is as follows. Required for the normal development of cilia in brain ependymal cells lining the ventricular surfaces. In Mus musculus (Mouse), this protein is Jhy protein.